Here is a 170-residue protein sequence, read N- to C-terminus: Peptide deformylase (170 aa).

Residues Cys94 and His136 each coordinate Fe cation. Glu137 is an active-site residue. Fe cation is bound at residue His140.

It belongs to the polypeptide deformylase family. Fe(2+) is required as a cofactor.

The enzyme catalyses N-terminal N-formyl-L-methionyl-[peptide] + H2O = N-terminal L-methionyl-[peptide] + formate. Removes the formyl group from the N-terminal Met of newly synthesized proteins. Requires at least a dipeptide for an efficient rate of reaction. N-terminal L-methionine is a prerequisite for activity but the enzyme has broad specificity at other positions. This is Peptide deformylase from Xylella fastidiosa (strain M12).